A 396-amino-acid chain; its full sequence is Putative F-box protein At4g22660 (396 aa).

One can recognise an F-box domain in the interval 7-58 (PNTWSDLPLDLLNLVFKRLSFANFRQAKSVCSSWYSASKQSVPKNQIPWLML).

The polypeptide is Putative F-box protein At4g22660 (Arabidopsis thaliana (Mouse-ear cress)).